Here is a 79-residue protein sequence, read N- to C-terminus: Small ribosomal subunit protein uS17 (79 aa).

The protein belongs to the universal ribosomal protein uS17 family. In terms of assembly, part of the 30S ribosomal subunit.

In terms of biological role, one of the primary rRNA binding proteins, it binds specifically to the 5'-end of 16S ribosomal RNA. The protein is Small ribosomal subunit protein uS17 of Orientia tsutsugamushi (strain Ikeda) (Rickettsia tsutsugamushi).